The sequence spans 607 residues: ATP-dependent rRNA helicase SPB4 (607 aa).

The Q motif signature appears at 7-35; that stretch reads WDDLEYPIQPWIRSAVDVMGFENMTPVQA. The 187-residue stretch at 38 to 224 folds into the Helicase ATP-binding domain; that stretch reads IPLFARNKDV…KTGLRNPVKV (187 aa). 51 to 58 contributes to the ATP binding site; it reads SVTGSGKT. Positions 172 to 175 match the DEAD box motif; that stretch reads DEAD. One can recognise a Helicase C-terminal domain in the interval 248-404; the sequence is KLEQVISIIN…EISLDIVNLP (157 aa). The segment at 527 to 607 is disordered; sequence KSELKKKNMS…NGMQGSFDDL (81 aa). The stretch at 529–565 forms a coiled coil; that stretch reads ELKKKNMSWSNNTQSKEEKVERRTKMALKRKRIEEEL. Composition is skewed to basic and acidic residues over residues 543–552 and 560–570; these read SKEEKVERRT and RIEEELSKEAD. Residues 587-601 are compositionally biased toward polar residues; that stretch reads ILQNKKSKNSNNGMQ.

The protein belongs to the DEAD box helicase family. DDX55/SPB4 subfamily. As to quaternary structure, component of pre-60S ribosomal complexes.

It localises to the nucleus. The protein resides in the nucleolus. It catalyses the reaction ATP + H2O = ADP + phosphate + H(+). In terms of biological role, ATP-binding RNA helicase involved in the biogenesis of 60S ribosomal subunits. Binds 90S pre-ribosomal particles and dissociates from pre-60S ribosomal particles after processing of 27SB pre-rRNA. Required for the normal formation of 18S rRNA through the processing of pre-rRNAs at sites A0, A1 and A2, and the normal formation of 25S and 5.8S rRNAs through the processing of pre-rRNAs at sites C1 and C2. This is ATP-dependent rRNA helicase SPB4 from Vanderwaltozyma polyspora (strain ATCC 22028 / DSM 70294 / BCRC 21397 / CBS 2163 / NBRC 10782 / NRRL Y-8283 / UCD 57-17) (Kluyveromyces polysporus).